Here is a 729-residue protein sequence, read N- to C-terminus: Hydroxamate siderophore receptor FhuE (729 aa).

A signal peptide spans 1 to 36 (MLSTQFNRDNQYQAITKPSLLAGCIALALLPSAAFA). A TonB box motif is present at residues 42-49 (ETVIVEGS). The disordered stretch occupies residues 48–72 (GSATAPDDGENDYSVTSTSAGTKMQ). A compositionally biased stretch (polar residues) spans 60 to 72 (YSVTSTSAGTKMQ). The TBDR plug domain maps to 74 to 183 (TQRDIPQSVT…PSAAINMVRK (110 aa)). Fe(III)-coprogen is bound by residues Arg117, Arg142, Trp275, Tyr357, Asn373, and Trp416. The region spanning 189–729 (EFKGDVSAEY…NFSITGTYQF (541 aa)) is the TBDR beta-barrel domain. Residues 712–729 (SIVYGTPRNFSITGTYQF) carry the TonB C-terminal box motif.

Belongs to the TonB-dependent receptor family.

It localises to the cell outer membrane. Functionally, involved in the active transport across the outer membrane of iron complexed with linear hydroxamate siderophores coprogen, rhodotorulic acid and ferrioxamine B. Binds Fe-coprogen with high affinity, rhodotorulic acid to a lesser extent, and weakly to ferrioxamine B. Selective for planar siderophores. Does not use cyclic siderophores ferrichrome nor ferrioxamine E as substrates. This Escherichia coli (strain K12) protein is Hydroxamate siderophore receptor FhuE.